A 477-amino-acid polypeptide reads, in one-letter code: Argininosuccinate lyase (477 aa).

The protein belongs to the lyase 1 family. Argininosuccinate lyase subfamily.

The protein localises to the cytoplasm. The catalysed reaction is 2-(N(omega)-L-arginino)succinate = fumarate + L-arginine. It functions in the pathway amino-acid biosynthesis; L-arginine biosynthesis; L-arginine from L-ornithine and carbamoyl phosphate: step 3/3. In Streptomyces avermitilis (strain ATCC 31267 / DSM 46492 / JCM 5070 / NBRC 14893 / NCIMB 12804 / NRRL 8165 / MA-4680), this protein is Argininosuccinate lyase.